The chain runs to 574 residues: Intraflagellar transport protein 56 homolog (574 aa).

TPR repeat units follow at residues 20–52, 57–90, and 151–184; these read AQKM…GNLD, DSLQ…DDAP, and LEDR…SPNL.

The protein belongs to the IFT56 family. As to quaternary structure, component of the IFT complex B composed of at least che-2, che-13, dyf-1, dyf-3, dyf-6, dyf-11, dyf-13, ift-20, ift-74, ift-81, ifta-2, osm-1, osm-5 and osm-6.

The protein resides in the cell projection. It localises to the cilium. Functionally, component of the intraflagellar transport (IFT) complex B required for transport of proteins in the motile cilium. May be required for ciliary entrance and transport of specific ciliary cargo proteins such as che-3 which are related to motility. This chain is Intraflagellar transport protein 56 homolog, found in Caenorhabditis elegans.